The sequence spans 164 residues: Peptidyl-prolyl cis-trans isomerase A-like 4D (164 aa).

Residues 7 to 163 (FFEITRDGKP…KKITIADCGQ (157 aa)) enclose the PPIase cyclophilin-type domain.

Belongs to the cyclophilin-type PPIase family. PPIase A subfamily.

It localises to the cytoplasm. It carries out the reaction [protein]-peptidylproline (omega=180) = [protein]-peptidylproline (omega=0). Functionally, PPIases accelerate the folding of proteins. It catalyzes the cis-trans isomerization of proline imidic peptide bonds in oligopeptides. This is Peptidyl-prolyl cis-trans isomerase A-like 4D from Homo sapiens (Human).